The chain runs to 243 residues: 7-cyano-7-deazaguanine synthase (243 aa).

18 to 28 (FSGGQDSATCL) serves as a coordination point for ATP. The Zn(2+) site is built by Cys206, Cys221, Cys224, and Cys227.

This sequence belongs to the QueC family. The cofactor is Zn(2+).

It carries out the reaction 7-carboxy-7-deazaguanine + NH4(+) + ATP = 7-cyano-7-deazaguanine + ADP + phosphate + H2O + H(+). It participates in purine metabolism; 7-cyano-7-deazaguanine biosynthesis. Functionally, catalyzes the ATP-dependent conversion of 7-carboxy-7-deazaguanine (CDG) to 7-cyano-7-deazaguanine (preQ(0)). This chain is 7-cyano-7-deazaguanine synthase, found in Maricaulis maris (strain MCS10) (Caulobacter maris).